Consider the following 908-residue polypeptide: 26S proteasome non-ATPase regulatory subunit 2 (908 aa).

M1 is subject to N-acetylmethionine. Residues 1–52 (MEEGGRDKAPVQPQQSPAAALGGTDEKPSGKERRDAGDKDKEQELSEEDKQL) are disordered. Over residues 10–20 (PVQPQQSPAAA) the composition is skewed to low complexity. S16 bears the Phosphoserine mark. The residue at position 24 (T24) is a Phosphothreonine. The segment covering 24 to 52 (TDEKPSGKERRDAGDKDKEQELSEEDKQL) has biased composition (basic and acidic residues). Phosphoserine occurs at positions 29 and 147. The residue at position 194 (Y194) is a Phosphotyrosine. S361 and S363 each carry phosphoserine. 5 PC repeats span residues 409 to 442 (SAAA…YIKS), 443 to 479 (GALL…TMRL), 480 to 514 (GSIF…SMEV), 517 to 551 (VTAL…TELK), and 560 to 589 (LGLG…PFRS). Position 551 is an N6-acetyllysine (K551). Residues 623–643 (KEKEEDKDKKEKKDKDKKEAP) show a composition bias toward basic and acidic residues. Residues 623–645 (KEKEEDKDKKEKKDKDKKEAPAD) are disordered. 2 PC repeats span residues 692 to 723 (LALA…EVSY) and 742 to 757 (AAML…KDPN). Residues 708-903 (DTLSKFSHDA…LEGFVILRKN (196 aa)) are required for interaction with UBLCP1.

It belongs to the proteasome subunit S2 family. Component of the 19S proteasome regulatory particle complex. The 26S proteasome consists of a 20S core particle (CP) and two 19S regulatory subunits (RP). The regulatory particle is made of a lid composed of 9 subunits, a base containing 6 ATPases and few additional components including PSMD2. Interacts with RPGRIP1L. Interacts with CRY1 in a KDM8-dependent manner. Interacts (via C-terminus) with phosphatase UBLCP1 (via ubiquitin-like domain); the interaction recruits UBLCP1 to the 19S regulatory particle where it dephosphorylates 19S subunit PSMC2/RPT1 which impairs PSMC2 ATPase activity and disrupts 26S proteasome assembly.

Its function is as follows. Component of the 26S proteasome, a multiprotein complex involved in the ATP-dependent degradation of ubiquitinated proteins. This complex plays a key role in the maintenance of protein homeostasis by removing misfolded or damaged proteins, which could impair cellular functions, and by removing proteins whose functions are no longer required. Therefore, the proteasome participates in numerous cellular processes, including cell cycle progression, apoptosis, or DNA damage repair. Functionally, binds to the intracellular domain of tumor necrosis factor type 1 receptor. The binding domain of TRAP1 and TRAP2 resides outside the death domain of TNFR1. The chain is 26S proteasome non-ATPase regulatory subunit 2 (PSMD2) from Pongo abelii (Sumatran orangutan).